The chain runs to 65 residues: MPKIKTVRGAAKRFKKTGAGGFKRKHANLRHILTKKATKRKRHLRPKGMVSKNDLGLVVACLPYA.

This sequence belongs to the bacterial ribosomal protein bL35 family.

This is Large ribosomal subunit protein bL35 from Yersinia enterocolitica serotype O:8 / biotype 1B (strain NCTC 13174 / 8081).